A 252-amino-acid polypeptide reads, in one-letter code: Short-chain dehydrogenase anuI (252 aa).

Residues Leu-18, Asp-65, Asn-92, Tyr-171, Lys-175, and Thr-206 each coordinate NADP(+). Tyr-171 functions as the Proton acceptor in the catalytic mechanism. Tyr-171 acts as the Proton donor in catalysis. Lys-175 (lowers pKa of active site Tyr) is an active-site residue.

It belongs to the short-chain dehydrogenases/reductases (SDR) family.

Highly reducing polyketide synthase; part of the gene cluster that mediates the biosynthesis of annullatin D, an alkylated aromatic polyketide with a fused dihydrobenzofuran lactone ring system that exhibits potent agonistic activities toward the cannabinoid receptors. AnuI does not seem to play a role within the pathway. The annullatin backbone 2-hydroxymethyl-3-pentylphenol is assembled from one acetyl-CoA starter unit and 5 malonyl-CoA elongation units by cooperation of the highly reducing polyketide synthase anuA, the short-chain dehydrogenase anuB and the oxidoreductase anuC, before being hydroxylated at the C-5 alkyl chain by the cytochrome P450 monooxygenase anuE to form (8S)-annullatin E. The prenyltransferase anuH subsequently installs one isoprenyl group at the benzene ring to form (8S)-annullatin J. Enzymatic or nonenzymatic dihydro-benzofuran ring formation between the prenyl and the phenolic hydroxyl groups in (8S)-annullatin J results in two diastereomers (2S,9S)-annullatin H and compound 12. The intermediate (2S,9S)-annullatin H is then converted to (2S,9S)-annullatin D by the FAD-linked oxidoreductase anuG-catalyzed five-member lactone ring formation. The isomer 12 acts as a substrate for the short-chain dehydrogenase anuF and is oxidized to (2R)-annullatin F, which is subsequently acetylated by an acetyltransferase leading to (2R)-annullatin G formation. The remaining enzymes identified within the cluster, anuD, anuI and anuJ, seem not to be involved in annullatin biosynthesis. The protein is Short-chain dehydrogenase anuI of Penicillium roqueforti (strain FM164).